The following is an 88-amino-acid chain: Small ribosomal subunit protein uS15 (88 aa).

It belongs to the universal ribosomal protein uS15 family. As to quaternary structure, part of the 30S ribosomal subunit. Forms a bridge to the 50S subunit in the 70S ribosome, contacting the 23S rRNA.

In terms of biological role, one of the primary rRNA binding proteins, it binds directly to 16S rRNA where it helps nucleate assembly of the platform of the 30S subunit by binding and bridging several RNA helices of the 16S rRNA. Forms an intersubunit bridge (bridge B4) with the 23S rRNA of the 50S subunit in the ribosome. The protein is Small ribosomal subunit protein uS15 of Flavobacterium psychrophilum (strain ATCC 49511 / DSM 21280 / CIP 103535 / JIP02/86).